We begin with the raw amino-acid sequence, 272 residues long: PILR alpha-associated neural protein (272 aa).

The N-terminal stretch at M1–G27 is a signal peptide. Residues A25–S93 are disordered. The Extracellular portion of the chain corresponds to S28 to P174. A glycan (O-linked (GalNAc...) threonine) is linked at T136. Residues Q175–F195 traverse the membrane as a helical segment. Topologically, residues K196–R272 are cytoplasmic. A disordered region spans residues R205–R272. Polar residues predominate over residues S209 to T225.

O-glycosylation at Thr-136 is essential for recognition by PILRA.

It is found in the membrane. Functionally, acts as a ligand for PILRA in neuronal tissues, where it may be involved in immune regulation. This chain is PILR alpha-associated neural protein (Pianp), found in Rattus norvegicus (Rat).